Reading from the N-terminus, the 303-residue chain is Sulfotransferase 6B1 (303 aa).

Position 65–70 (65–70) interacts with 3'-phosphoadenylyl sulfate; that stretch reads KCGSNW. The active-site Proton acceptor is the His118. 3'-phosphoadenylyl sulfate contacts are provided by residues Arg140, Ser148, Tyr203, 237–242, and 259–261; these read STFQAM and RKG.

The protein belongs to the sulfotransferase 1 family.

It is found in the cytoplasm. The protein resides in the cytosol. The catalysed reaction is thyroxine + 3'-phosphoadenylyl sulfate = thyroxine sulfate + adenosine 3',5'-bisphosphate + H(+). Sulfotransferase that utilizes 3'-phospho-5'-adenylyl sulfate (PAPS) as sulfonate donor to catalyze the sulfate conjugation of thyroxine. Involved in the metabolism of thyroxine. In Gorilla gorilla gorilla (Western lowland gorilla), this protein is Sulfotransferase 6B1 (SULT6B1).